A 297-amino-acid chain; its full sequence is Tyrosine recombinase XerD (297 aa).

The Core-binding (CB) domain maps to 1–86; sequence MNDLIDDFLH…SLRSFFHYLM (86 aa). One can recognise a Tyr recombinase domain in the interval 107–291; it reads SLPKVLNLDD…TKLRLKDVYK (185 aa). Catalysis depends on residues R147, K171, H243, R246, and H269. Catalysis depends on Y278, which acts as the O-(3'-phospho-DNA)-tyrosine intermediate.

The protein belongs to the 'phage' integrase family. XerD subfamily. Forms a cyclic heterotetrameric complex composed of two molecules of XerC and two molecules of XerD.

It is found in the cytoplasm. Its function is as follows. Site-specific tyrosine recombinase, which acts by catalyzing the cutting and rejoining of the recombining DNA molecules. The XerC-XerD complex is essential to convert dimers of the bacterial chromosome into monomers to permit their segregation at cell division. It also contributes to the segregational stability of plasmids. This Listeria innocua serovar 6a (strain ATCC BAA-680 / CLIP 11262) protein is Tyrosine recombinase XerD.